The following is a 344-amino-acid chain: L-sulfolactate dehydrogenase (344 aa).

Belongs to the LDH2/MDH2 oxidoreductase family.

It localises to the cytoplasm. It catalyses the reaction a (2S)-2-hydroxycarboxylate + NAD(+) = a 2-oxocarboxylate + NADH + H(+). It functions in the pathway cofactor biosynthesis; coenzyme M biosynthesis; sulfoacetaldehyde from phosphoenolpyruvate and sulfite: step 3/4. The protein operates within cofactor biosynthesis; 5,6,7,8-tetrahydromethanopterin biosynthesis. Catalyzes the reduction of sulfopyruvate to (R)-sulfolactate much more efficiently than the reverse reaction. Also catalyzes the reduction of oxaloacetate, alpha-ketoglutarate, and to a much lower extent, KHTCA, but not pyruvate. Involved in the biosynthesis of both coenzyme M (with (R)-sulfolactate) and methanopterin (with alpha-ketoglutarate). The polypeptide is L-sulfolactate dehydrogenase (comC) (Methanocaldococcus jannaschii (strain ATCC 43067 / DSM 2661 / JAL-1 / JCM 10045 / NBRC 100440) (Methanococcus jannaschii)).